A 228-amino-acid polypeptide reads, in one-letter code: 2,3-bisphosphoglycerate-dependent phosphoglycerate mutase (228 aa).

Substrate contacts are provided by residues 8 to 15 (RHGQSVWN), 21 to 22 (TG), Arg60, 87 to 90 (ERHY), Lys98, 114 to 115 (RR), and 183 to 184 (GN). Residue His9 is the Tele-phosphohistidine intermediate of the active site. Glu87 functions as the Proton donor/acceptor in the catalytic mechanism.

The protein belongs to the phosphoglycerate mutase family. BPG-dependent PGAM subfamily.

The catalysed reaction is (2R)-2-phosphoglycerate = (2R)-3-phosphoglycerate. The protein operates within carbohydrate degradation; glycolysis; pyruvate from D-glyceraldehyde 3-phosphate: step 3/5. Its function is as follows. Catalyzes the interconversion of 2-phosphoglycerate and 3-phosphoglycerate. The polypeptide is 2,3-bisphosphoglycerate-dependent phosphoglycerate mutase (Staphylococcus carnosus (strain TM300)).